The sequence spans 219 residues: UPF0173 metal-dependent hydrolase Mlab_1154 (219 aa).

This sequence belongs to the UPF0173 family.

The polypeptide is UPF0173 metal-dependent hydrolase Mlab_1154 (Methanocorpusculum labreanum (strain ATCC 43576 / DSM 4855 / Z)).